The chain runs to 305 residues: tRNA dimethylallyltransferase (305 aa).

14–21 contacts ATP; that stretch reads GPTASGKT. 16–21 lines the substrate pocket; that stretch reads TASGKT. Interaction with substrate tRNA regions lie at residues 39 to 42, 163 to 167, and 243 to 248; these read DSAL, QRIIR, and RCVGYR.

It belongs to the IPP transferase family. Monomer. It depends on Mg(2+) as a cofactor.

The catalysed reaction is adenosine(37) in tRNA + dimethylallyl diphosphate = N(6)-dimethylallyladenosine(37) in tRNA + diphosphate. In terms of biological role, catalyzes the transfer of a dimethylallyl group onto the adenine at position 37 in tRNAs that read codons beginning with uridine, leading to the formation of N6-(dimethylallyl)adenosine (i(6)A). The sequence is that of tRNA dimethylallyltransferase from Vesicomyosocius okutanii subsp. Calyptogena okutanii (strain HA).